Consider the following 578-residue polypeptide: Avenacosidase 2 (578 aa).

A chloroplast-targeting transit peptide spans 1–57 (MALLCSALSNSTHPSFRSHIAGANSENLWHLSAHPAQKSKRRCNLTLSSRAAARISS). Residues Gln-89, His-193, and 238-239 (NE) each bind a beta-D-glucoside. Catalysis depends on Glu-239, which acts as the Proton donor. A disulfide bridge connects residues Cys-258 and Cys-264. A beta-D-glucoside-binding positions include Tyr-381, Glu-454, Trp-504, 511-512 (EW), and Phe-520. Residue Glu-454 is the Nucleophile of the active site.

It belongs to the glycosyl hydrolase 1 family. In terms of assembly, heteromultimer with P60A in a 1:1 stoichiometry. Aggregates to form the fibrillar stromacentre.

It localises to the plastid. It is found in the chloroplast stroma. The catalysed reaction is avenacoside B + H2O = 26-desgluco-avenacoside B + D-glucose. Beta-glucosidase acting as a preformed defense system. Hydrolyzes the bisdesmosides avenacosides A and B to 26-desgluco-avenacosides exhibiting fungicidal activity. Can use beta-fucoside &gt; beta-glucoside &gt; beta-galactoside &gt; beta-xyloside as substrates, but not alpha-glycosides, beta-thioglucosides and disaccharides. The sequence is that of Avenacosidase 2 (P60B) from Avena sativa (Oat).